A 426-amino-acid polypeptide reads, in one-letter code: MLDIKQIRENPQLVQERLNSRSGKYDIEPILQLDRQQRELEGTRSQLQARSNEIGKIVGQKIKSGINSQDPEIQALRDEGNSVKATLSELEPQEKDLKAQIAQLVLALPNLPSDSTPLGKNEEDNVEVRRWGDEYIPQNPNILPHWEIGEKLGILNVERAVKVAQSRFVALVGAGAALERALIQFMLTLHTQAGYLEVSPPLLVNTESLTATGQLPKFAEESFKCADDDLWLIPTAEVPVTNLYRGEILAAEDLPIYHCAFTPCFRREAGSYGRDMRGLIRLHQFNKVEMVKFVEPSTSFDELEKLVGNAEAILQALRLPYRVVNLSTGDLGFASTKTYDLEVWLPSSGKYREISSCSNTIDFQARRADIRFKEAGKKGTQFVHTLNGSGLAVGRTMAAILENYQQPDGTVKIPEALQPYLGREVL.

An L-serine-binding site is contributed by 235-237 (TAE). 266–268 (RRE) contributes to the ATP binding site. Glu-289 provides a ligand contact to L-serine. 353 to 356 (EISS) is an ATP binding site. Ser-389 is an L-serine binding site.

It belongs to the class-II aminoacyl-tRNA synthetase family. Type-1 seryl-tRNA synthetase subfamily. Homodimer. The tRNA molecule binds across the dimer.

The protein resides in the cytoplasm. The enzyme catalyses tRNA(Ser) + L-serine + ATP = L-seryl-tRNA(Ser) + AMP + diphosphate + H(+). It catalyses the reaction tRNA(Sec) + L-serine + ATP = L-seryl-tRNA(Sec) + AMP + diphosphate + H(+). It participates in aminoacyl-tRNA biosynthesis; selenocysteinyl-tRNA(Sec) biosynthesis; L-seryl-tRNA(Sec) from L-serine and tRNA(Sec): step 1/1. Catalyzes the attachment of serine to tRNA(Ser). Is also able to aminoacylate tRNA(Sec) with serine, to form the misacylated tRNA L-seryl-tRNA(Sec), which will be further converted into selenocysteinyl-tRNA(Sec). The protein is Serine--tRNA ligase of Nostoc punctiforme (strain ATCC 29133 / PCC 73102).